Reading from the N-terminus, the 744-residue chain is Elongation factor G, mitochondrial (744 aa).

The N-terminal 25 residues, M1 to F25, are a transit peptide targeting the mitochondrion. Positions E38–G315 constitute a tr-type G domain. Residues A47–T54, D114–H118, and N168–D171 each bind GTP.

The protein belongs to the TRAFAC class translation factor GTPase superfamily. Classic translation factor GTPase family. EF-G/EF-2 subfamily.

The protein localises to the mitochondrion. It functions in the pathway protein biosynthesis; polypeptide chain elongation. Its function is as follows. Mitochondrial GTPase that catalyzes the GTP-dependent ribosomal translocation step during translation elongation. During this step, the ribosome changes from the pre-translocational (PRE) to the post-translocational (POST) state as the newly formed A-site-bound peptidyl-tRNA and P-site-bound deacylated tRNA move to the P and E sites, respectively. Catalyzes the coordinated movement of the two tRNA molecules, the mRNA and conformational changes in the ribosome. This chain is Elongation factor G, mitochondrial, found in Culex quinquefasciatus (Southern house mosquito).